Here is a 259-residue protein sequence, read N- to C-terminus: UPF0246 protein PP_1289 (259 aa).

This sequence belongs to the UPF0246 family.

The polypeptide is UPF0246 protein PP_1289 (Pseudomonas putida (strain ATCC 47054 / DSM 6125 / CFBP 8728 / NCIMB 11950 / KT2440)).